The primary structure comprises 254 residues: HTH-type transcriptional regulator GolR (254 aa).

One can recognise an HTH deoR-type domain in the interval 3-58 (PFERQNKIIHLLDQNNKITVPELSRILDVSISTIRNDLSALEESGMIKKVHGGAVL). The H-T-H motif DNA-binding region spans 20-39 (ITVPELSRILDVSISTIRND).

Involved in the glycerol metabolism. Repressor of the gol operon for glycerol metabolism. The chain is HTH-type transcriptional regulator GolR from Listeria innocua serovar 6a (strain ATCC BAA-680 / CLIP 11262).